The sequence spans 204 residues: Outer-membrane lipoprotein LolB (204 aa).

A signal peptide spans 1–16; that stretch reads MLRHLLVFSLIALLAG. The N-palmitoyl cysteine moiety is linked to residue C17. A lipid anchor (S-diacylglycerol cysteine) is attached at C17.

This sequence belongs to the LolB family. Monomer.

The protein resides in the cell outer membrane. Its function is as follows. Plays a critical role in the incorporation of lipoproteins in the outer membrane after they are released by the LolA protein. In Ectopseudomonas mendocina (strain ymp) (Pseudomonas mendocina), this protein is Outer-membrane lipoprotein LolB.